The chain runs to 366 residues: Alanine racemase (366 aa).

Lys40 functions as the Proton acceptor; specific for D-alanine in the catalytic mechanism. Lys40 is modified (N6-(pyridoxal phosphate)lysine). A substrate-binding site is contributed by Arg136. Tyr263 acts as the Proton acceptor; specific for L-alanine in catalysis. A substrate-binding site is contributed by Met310.

Belongs to the alanine racemase family. It depends on pyridoxal 5'-phosphate as a cofactor.

The catalysed reaction is L-alanine = D-alanine. Its pathway is amino-acid biosynthesis; D-alanine biosynthesis; D-alanine from L-alanine: step 1/1. Catalyzes the interconversion of L-alanine and D-alanine. May also act on other amino acids. The chain is Alanine racemase (alr) from Streptococcus pyogenes serotype M28 (strain MGAS6180).